Here is a 430-residue protein sequence, read N- to C-terminus: Methylenetetrahydrofolate--tRNA-(uracil-5-)-methyltransferase TrmFO (430 aa).

Gly-9–Gly-14 serves as a coordination point for FAD.

It belongs to the MnmG family. TrmFO subfamily. FAD is required as a cofactor.

Its subcellular location is the cytoplasm. It carries out the reaction uridine(54) in tRNA + (6R)-5,10-methylene-5,6,7,8-tetrahydrofolate + NADH + H(+) = 5-methyluridine(54) in tRNA + (6S)-5,6,7,8-tetrahydrofolate + NAD(+). The catalysed reaction is uridine(54) in tRNA + (6R)-5,10-methylene-5,6,7,8-tetrahydrofolate + NADPH + H(+) = 5-methyluridine(54) in tRNA + (6S)-5,6,7,8-tetrahydrofolate + NADP(+). Catalyzes the folate-dependent formation of 5-methyl-uridine at position 54 (M-5-U54) in all tRNAs. This Fervidobacterium nodosum (strain ATCC 35602 / DSM 5306 / Rt17-B1) protein is Methylenetetrahydrofolate--tRNA-(uracil-5-)-methyltransferase TrmFO.